A 517-amino-acid polypeptide reads, in one-letter code: Glycerol kinase (517 aa).

Position 24 (Thr-24) interacts with ADP. The ATP site is built by Thr-24, Thr-25, and Ser-26. Thr-24 contributes to the sn-glycerol 3-phosphate binding site. Arg-28 serves as a coordination point for ADP. Residues Arg-94, Glu-95, Tyr-146, and Asp-261 each contribute to the sn-glycerol 3-phosphate site. 5 residues coordinate glycerol: Arg-94, Glu-95, Tyr-146, Asp-261, and Gln-262. Residues Thr-283 and Gly-327 each coordinate ADP. 4 residues coordinate ATP: Thr-283, Gly-327, Gln-331, and Gly-428. ADP contacts are provided by Gly-428 and Asn-432.

This sequence belongs to the FGGY kinase family.

The enzyme catalyses glycerol + ATP = sn-glycerol 3-phosphate + ADP + H(+). Its pathway is polyol metabolism; glycerol degradation via glycerol kinase pathway; sn-glycerol 3-phosphate from glycerol: step 1/1. Inhibited by fructose 1,6-bisphosphate (FBP). In terms of biological role, key enzyme in the regulation of glycerol uptake and metabolism. Catalyzes the phosphorylation of glycerol to yield sn-glycerol 3-phosphate. This Mycobacterium tuberculosis (strain ATCC 25177 / H37Ra) protein is Glycerol kinase.